The chain runs to 641 residues: Sodium-dependent nutrient amino acid transporter 1 (641 aa).

The tract at residues 1–36 (MELKGVQPSNGSANGNGTTNAASTEKTDAEKHTPER) is disordered. Topologically, residues 1–38 (MELKGVQPSNGSANGNGTTNAASTEKTDAEKHTPERTN) are cytoplasmic. Positions 9-24 (SNGSANGNGTTNAAST) are enriched in low complexity. Basic and acidic residues predominate over residues 25–35 (EKTDAEKHTPE). The next 3 helical transmembrane spans lie at 39-59 (WGNG…LGNV), 72-92 (GAFL…MYYL), and 109-129 (SVVP…ICII). 2 N-linked (GlcNAc...) asparagine glycosylation sites follow: asparagine 183 and asparagine 188. 9 helical membrane passes run 229 to 249 (PDWK…LVIM), 258 to 278 (AAYF…IRAV), 307 to 327 (AVVQ…MFAS), 341 to 361 (IVTT…FAIL), 401 to 421 (LFSV…IVAL), 441 to 461 (VALI…TPGG), 474 to 494 (TYVV…VYGL), 516 to 536 (CWSF…MVTI), and 552 to 572 (IAGW…GLWY).

This sequence belongs to the sodium:neurotransmitter symporter (SNF) (TC 2.A.22) family.

Its subcellular location is the membrane. Functionally, unusual broad substrate spectrum amino acid:sodium cotransporter that promotes absorption of the D isomers of essential amino acids. Neutral amino acids are the preferred substrates, especially methionine and phenylalanine. The sequence is that of Sodium-dependent nutrient amino acid transporter 1 from Drosophila erecta (Fruit fly).